A 928-amino-acid polypeptide reads, in one-letter code: Nitrogen network kinase 1 (928 aa).

Positions 1–12 (MFTSQRQLRQNG) are enriched in polar residues. Disordered regions lie at residues 1-43 (MFTS…SYGR) and 81-118 (HEHP…LELG). Low complexity predominate over residues 13 to 29 (SPMSSSRSSQHSSGTAS). Polar residues-rich tracts occupy residues 30–40 (PISDSPASNRS) and 86–107 (RSTL…SQVN). Residues serine 178 and serine 179 each carry the phosphoserine modification. Residues 374–394 (ANDDNINSRNTPNNSNDTYVN) are disordered. The segment covering 375-391 (NDDNINSRNTPNNSNDT) has biased composition (low complexity). Phosphoserine occurs at positions 405 and 426. One can recognise a Protein kinase domain in the interval 449 to 912 (HRLGKIIGFG…WKLKRIEEVL (464 aa)). Residues 455-463 (IGFGAWGII) and lysine 478 each bind ATP. Residue aspartate 580 is the Proton acceptor of the active site. Disordered stretches follow at residues 670–741 (ENRK…KYIG) and 767–813 (YDSP…SGSS). Positions 683 to 696 (VSSSSHSLKHLNQP) are enriched in polar residues. Phosphoserine is present on serine 737. Phosphotyrosine is present on tyrosine 739. Positions 769–813 (SPDSSQSEISAASSSSSNLSSLSSSTKASAVTNSGVTTSSPSGSS) are enriched in low complexity.

This sequence belongs to the protein kinase superfamily. Ser/Thr protein kinase family. Interacts with URE2 and GDH2. Also interacts with the TORC1 kinase complex.

The protein resides in the cytoplasm. It carries out the reaction L-seryl-[protein] + ATP = O-phospho-L-seryl-[protein] + ADP + H(+). It catalyses the reaction L-threonyl-[protein] + ATP = O-phospho-L-threonyl-[protein] + ADP + H(+). Functionally, serine/threonine-protein kinase involved in the phosphorylation of the NAD(+)-dependent glutamate dehydrogenase GDH2. When overexpressed, confers hypersensitivity to rapamycin and induces rapid nuclear accumulation of GLN3 to activate the transcription of nitrogen-regulated genes. The chain is Nitrogen network kinase 1 (NNK1) from Saccharomyces cerevisiae (strain ATCC 204508 / S288c) (Baker's yeast).